Reading from the N-terminus, the 180-residue chain is Cytokinin-beta-glucosidase 4 (180 aa).

In terms of biological role, hydrolyzes cytokinin glucosides thus liberating free cytokinins. The protein is Cytokinin-beta-glucosidase 4 (ROLC4) of Panax ginseng (Korean ginseng).